Here is a 331-residue protein sequence, read N- to C-terminus: Nodulation protein D 2 (331 aa).

The region spanning 6–63 is the HTH lysR-type domain; sequence LDLNLLVALDALMTERSLTAAARKINLSQPAMSAAVARLRSYFRDELFAMRGRKLVPT. The H-T-H motif DNA-binding region spans 23 to 42; the sequence is LTAAARKINLSQPAMSAAVA.

Belongs to the LysR transcriptional regulatory family.

In terms of biological role, nodD regulates the expression of the nodABCFE genes which encode other nodulation proteins. NodD is also a negative regulator of its own expression. Binds flavonoids as inducers. The chain is Nodulation protein D 2 (nodD2) from Bradyrhizobium elkanii.